A 434-amino-acid polypeptide reads, in one-letter code: Cysteine--tRNA ligase (434 aa).

Residue Cys28 participates in Zn(2+) binding. The short motif at 30-40 (PTVYDDIHIGN) is the 'HIGH' region element. 3 residues coordinate Zn(2+): Cys207, His232, and Glu236. Positions 264–268 (KMSKS) match the 'KMSKS' region motif. Lys267 is an ATP binding site.

It belongs to the class-I aminoacyl-tRNA synthetase family. Monomer. It depends on Zn(2+) as a cofactor.

It localises to the cytoplasm. The catalysed reaction is tRNA(Cys) + L-cysteine + ATP = L-cysteinyl-tRNA(Cys) + AMP + diphosphate. The protein is Cysteine--tRNA ligase of Acholeplasma laidlawii (strain PG-8A).